Here is a 463-residue protein sequence, read N- to C-terminus: Phosphomethylpyrimidine synthase (463 aa).

Substrate is bound by residues asparagine 80, methionine 109, tyrosine 138, histidine 173, 193 to 195 (SRG), 234 to 237 (DGLR), and glutamate 273. Histidine 277 serves as a coordination point for Zn(2+). Tyrosine 300 provides a ligand contact to substrate. Histidine 341 provides a ligand contact to Zn(2+). Residues cysteine 421, cysteine 424, and cysteine 429 each contribute to the [4Fe-4S] cluster site.

The protein belongs to the ThiC family. Homodimer. It depends on [4Fe-4S] cluster as a cofactor.

It catalyses the reaction 5-amino-1-(5-phospho-beta-D-ribosyl)imidazole + S-adenosyl-L-methionine = 4-amino-2-methyl-5-(phosphooxymethyl)pyrimidine + CO + 5'-deoxyadenosine + formate + L-methionine + 3 H(+). Its pathway is cofactor biosynthesis; thiamine diphosphate biosynthesis. In terms of biological role, catalyzes the synthesis of the hydroxymethylpyrimidine phosphate (HMP-P) moiety of thiamine from aminoimidazole ribotide (AIR) in a radical S-adenosyl-L-methionine (SAM)-dependent reaction. This is Phosphomethylpyrimidine synthase from Anaeromyxobacter sp. (strain K).